The primary structure comprises 833 residues: Leucine--tRNA ligase (833 aa).

The 'HIGH' region motif lies at 41 to 52 (PYPSGAGLHVGH). The short motif at 610 to 614 (KMSKS) is the 'KMSKS' region element. Residue Lys-613 coordinates ATP.

Belongs to the class-I aminoacyl-tRNA synthetase family.

It is found in the cytoplasm. The enzyme catalyses tRNA(Leu) + L-leucine + ATP = L-leucyl-tRNA(Leu) + AMP + diphosphate. The chain is Leucine--tRNA ligase from Streptococcus pyogenes serotype M4 (strain MGAS10750).